The sequence spans 261 residues: Imidazole glycerol phosphate synthase subunit HisF (261 aa).

Residues aspartate 12 and aspartate 131 contribute to the active site.

Belongs to the HisA/HisF family. In terms of assembly, heterodimer of HisH and HisF.

It localises to the cytoplasm. It catalyses the reaction 5-[(5-phospho-1-deoxy-D-ribulos-1-ylimino)methylamino]-1-(5-phospho-beta-D-ribosyl)imidazole-4-carboxamide + L-glutamine = D-erythro-1-(imidazol-4-yl)glycerol 3-phosphate + 5-amino-1-(5-phospho-beta-D-ribosyl)imidazole-4-carboxamide + L-glutamate + H(+). It participates in amino-acid biosynthesis; L-histidine biosynthesis; L-histidine from 5-phospho-alpha-D-ribose 1-diphosphate: step 5/9. Functionally, IGPS catalyzes the conversion of PRFAR and glutamine to IGP, AICAR and glutamate. The HisF subunit catalyzes the cyclization activity that produces IGP and AICAR from PRFAR using the ammonia provided by the HisH subunit. This chain is Imidazole glycerol phosphate synthase subunit HisF, found in Brucella anthropi (strain ATCC 49188 / DSM 6882 / CCUG 24695 / JCM 21032 / LMG 3331 / NBRC 15819 / NCTC 12168 / Alc 37) (Ochrobactrum anthropi).